The primary structure comprises 109 residues: Nucleoid-associated protein VP2178 (109 aa).

Disordered regions lie at residues 1–22 (MFGK…ERMQ) and 88–109 (QKEK…KMPF).

The protein belongs to the YbaB/EbfC family. In terms of assembly, homodimer.

It localises to the cytoplasm. The protein resides in the nucleoid. Functionally, binds to DNA and alters its conformation. May be involved in regulation of gene expression, nucleoid organization and DNA protection. The sequence is that of Nucleoid-associated protein VP2178 from Vibrio parahaemolyticus serotype O3:K6 (strain RIMD 2210633).